The following is an 867-amino-acid chain: Leucine--tRNA ligase (867 aa).

Positions 40-51 match the 'HIGH' region motif; the sequence is PYPSGAGLHVGH. A 'KMSKS' region motif is present at residues 638–642; the sequence is KMSKS. K641 is a binding site for ATP.

It belongs to the class-I aminoacyl-tRNA synthetase family.

The protein resides in the cytoplasm. It catalyses the reaction tRNA(Leu) + L-leucine + ATP = L-leucyl-tRNA(Leu) + AMP + diphosphate. The sequence is that of Leucine--tRNA ligase from Leptospira biflexa serovar Patoc (strain Patoc 1 / Ames).